Reading from the N-terminus, the 503-residue chain is Probable cytosol aminopeptidase (503 aa).

The Mn(2+) site is built by Lys270 and Asp275. Lys282 is an active-site residue. The Mn(2+) site is built by Asp293, Asp352, and Glu354. Arg356 is an active-site residue.

It belongs to the peptidase M17 family. Requires Mn(2+) as cofactor.

It is found in the cytoplasm. It carries out the reaction Release of an N-terminal amino acid, Xaa-|-Yaa-, in which Xaa is preferably Leu, but may be other amino acids including Pro although not Arg or Lys, and Yaa may be Pro. Amino acid amides and methyl esters are also readily hydrolyzed, but rates on arylamides are exceedingly low.. The catalysed reaction is Release of an N-terminal amino acid, preferentially leucine, but not glutamic or aspartic acids.. Its function is as follows. Presumably involved in the processing and regular turnover of intracellular proteins. Catalyzes the removal of unsubstituted N-terminal amino acids from various peptides. The protein is Probable cytosol aminopeptidase of Shigella dysenteriae serotype 1 (strain Sd197).